Here is a 142-residue protein sequence, read N- to C-terminus: MTNSFENSRRDLRERAFQALFNMEHGGDFLSASQFAYDYDKVSDQEHDIPAFLLTLVNGVVNHKDELDAIIKEHLKAGWSIERLTLTDRTMLRLGLYEIKFFEETPDRVALNEIIEIAKKYSDETSAKFINGLLSQFVSDSE.

Belongs to the NusB family.

Involved in transcription antitermination. Required for transcription of ribosomal RNA (rRNA) genes. Binds specifically to the boxA antiterminator sequence of the ribosomal RNA (rrn) operons. The protein is Transcription antitermination protein NusB of Streptococcus uberis (strain ATCC BAA-854 / 0140J).